The primary structure comprises 176 residues: Ribosome maturation factor RimM (176 aa).

A PRC barrel domain is found at 101–174 (EGHYYIYQLL…EIRVELPPGL (74 aa)).

It belongs to the RimM family. In terms of assembly, binds ribosomal protein uS19.

The protein resides in the cytoplasm. An accessory protein needed during the final step in the assembly of 30S ribosomal subunit, possibly for assembly of the head region. Essential for efficient processing of 16S rRNA. May be needed both before and after RbfA during the maturation of 16S rRNA. It has affinity for free ribosomal 30S subunits but not for 70S ribosomes. In Moorella thermoacetica (strain ATCC 39073 / JCM 9320), this protein is Ribosome maturation factor RimM.